A 26-amino-acid chain; its full sequence is Coenzyme PQQ synthesis protein A (26 aa).

Residues 16-20 (EINMY) constitute a cross-link (pyrroloquinoline quinone (Glu-Tyr)).

Belongs to the PqqA family.

Its pathway is cofactor biosynthesis; pyrroloquinoline quinone biosynthesis. Its function is as follows. Required for coenzyme pyrroloquinoline quinone (PQQ) biosynthesis. PQQ is probably formed by cross-linking a specific glutamate to a specific tyrosine residue and excising these residues from the peptide. The polypeptide is Coenzyme PQQ synthesis protein A (Cereibacter sphaeroides (strain ATCC 17029 / ATH 2.4.9) (Rhodobacter sphaeroides)).